A 602-amino-acid chain; its full sequence is mRNA-decapping enzyme 1A (602 aa).

S82 is modified (phosphoserine). Positions 152–161 (RSQQAARDKQ) are enriched in basic and acidic residues. 3 disordered regions span residues 152–174 (RSQQ…DQRP), 191–234 (NQMG…PSGH), and 267–291 (GDAS…APQS). Residues S162, S199, and S200 each carry the phosphoserine modification. Positions 193–229 (MGGSNISSPGLQPSTQLSNLGSTETLEETPSGSQDKS) are enriched in polar residues. Phosphoserine occurs at positions 335 and 339. T367 carries the post-translational modification Phosphothreonine. S372 is modified (phosphoserine). Asymmetric dimethylarginine is present on R395. Position 420 is a phosphothreonine (T420). A phosphoserine mark is found at S441, S542, S543, and S545. 2 positions are modified to phosphothreonine: T548 and T551.

It belongs to the DCP1 family. In terms of assembly, forms a complex with EDC3, DCP2, DDX6 and EDC4/HEDLS, within this complex directly interacts with EDC3. Part of a cytoplasmic complex containing proteins involved in mRNA decay, including XRN1 and LSM1. Interacts with DCP1B. Interacts with DCP2. Interacts with DDX17 in an RNA-independent manner. Interacts with PNRC2. Interacts with SMAD4. Interacts with UPF1. Interacts with ZC3HAV1. Interacts with ZFP36L1. Interacts with NBDY. Interacts with DHX34; the interaction is RNA-independent. As to expression, ubiquitous, with highest expression in the spleen and testis (at protein level).

The protein resides in the cytoplasm. The protein localises to the P-body. It localises to the nucleus. It carries out the reaction a 5'-end (N(7)-methyl 5'-triphosphoguanosine)-ribonucleoside in mRNA + H2O = N(7)-methyl-GDP + a 5'-end phospho-ribonucleoside in mRNA + 2 H(+). In terms of biological role, necessary for the degradation of mRNAs, both in normal mRNA turnover and in nonsense-mediated mRNA decay. Removes the 7-methyl guanine cap structure from mRNA molecules, yielding a 5'-phosphorylated mRNA fragment and 7m-GDP. Contributes to the transactivation of target genes after stimulation by TGFB1. Essential for embryonic development. This is mRNA-decapping enzyme 1A (Dcp1a) from Mus musculus (Mouse).